A 297-amino-acid polypeptide reads, in one-letter code: uncharacterized protein (297 aa).

The segment at 1-29 (MAESKAKNMFQKLSLTPKRNHEHDAGRNI) is disordered. Residues 19–29 (RNHEHDAGRNI) show a composition bias toward basic and acidic residues.

This is an uncharacterized protein from Caenorhabditis elegans.